Here is a 1136-residue protein sequence, read N- to C-terminus: Nuclear pore complex protein Nup133 (1136 aa).

Residues 1–26 (MFSPRGTPGSGRRQAPRTGGRRSVSA) form a disordered region.

The protein belongs to the nucleoporin Nup133 family. In terms of assembly, forms part of the Nup160 subcomplex in the nuclear pore which is composed of NUP160, NUP133, NUP107 and Nup96. This complex plays a role in RNA export and in tethering Nup98 and NUP153 to the nucleus. In terms of tissue distribution, widely expressed in the embryo and in adult tissues. Higher expression is observed in the brain, testes, ovary, skin, and kidney.

It is found in the nucleus. Its subcellular location is the nuclear pore complex. The protein resides in the chromosome. It localises to the centromere. The protein localises to the kinetochore. Its function is as follows. Involved in poly(A)+ RNA transport. Involved in nephrogenesis. The polypeptide is Nuclear pore complex protein Nup133 (Danio rerio (Zebrafish)).